A 179-amino-acid chain; its full sequence is Diphosphoinositol polyphosphate phosphohydrolase 2 (179 aa).

Residues Arg9, 17–19 (KKR), and 38–40 (SSR) contribute to the substrate site. The Nudix hydrolase domain occupies 17-143 (KKRAACLCFR…VHAEYLERLK (127 aa)). Positions 49 and 65 each coordinate Mg(2+). A Nudix box motif is present at residues 50–71 (GGVEPEEEPGGAAAREVYEEAG). Glu68 functions as the Proton acceptor in the catalytic mechanism. Glu69 serves as a coordination point for Mg(2+). Residues 88–90 (RKH), Arg114, and Lys132 each bind substrate.

Belongs to the Nudix hydrolase family. DIPP subfamily. It depends on Mg(2+) as a cofactor. Mn(2+) is required as a cofactor.

It localises to the cytoplasm. The enzyme catalyses diphospho-myo-inositol polyphosphate + H2O = myo-inositol polyphosphate + phosphate.. It carries out the reaction 5-diphospho-1D-myo-inositol 1,2,3,4,6-pentakisphosphate + H2O = 1D-myo-inositol hexakisphosphate + phosphate + H(+). It catalyses the reaction 3,5-bis(diphospho)-1D-myo-inositol 1,2,4,6-tetrakisphosphate + H2O = 3-diphospho-1D-myo-inositol 1,2,4,5,6-pentakisphosphate + phosphate + 2 H(+). The catalysed reaction is 5-diphospho-1D-myo-inositol 1,3,4,6-tetrakisphosphate + H2O = 1D-myo-inositol 1,3,4,5,6-pentakisphosphate + phosphate + H(+). The enzyme catalyses P(1),P(6)-bis(5'-adenosyl) hexaphosphate + H2O = 2 ATP + 2 H(+). It carries out the reaction P(1),P(5)-bis(5'-adenosyl) pentaphosphate + H2O = ADP + ATP + 2 H(+). It catalyses the reaction 5-phospho-alpha-D-ribose 1-diphosphate + H2O = alpha-D-ribose 1,5-bisphosphate + phosphate + H(+). Functionally, cleaves the beta-phosphate from diphosphoinositol polyphosphates such as PP-InsP5 (diphosphoinositol pentakisphosphate), PP-InsP4 (diphosphoinositol tetrakisphosphate) and [PP]2-InsP4 (bisdiphosphoinositol tetrakisphosphate), suggesting that it may play a role in signal transduction. Diadenosine polyphosphates, particularly Ap6A (P(1),P(6)-bis(5a-adenosyl) hexaphosphate) and Ap5A (P(1),P(5)-bis(5'-adenosyl) pentaphosphate) are downstream effectors of a signaling cascade that regulates cardiac KATP channels, can also be substrates, although with lower preference than the diphosphoinositol polyphosphates. Can also catalyze the hydrolysis of 5-phosphoribose 1-diphosphate, generating the glycolytic activator ribose 1,5-bisphosphate. Does not play a role in U8 snoRNA decapping activity. Binds U8 snoRNA. This is Diphosphoinositol polyphosphate phosphohydrolase 2 from Rattus norvegicus (Rat).